A 200-amino-acid chain; its full sequence is dITP/XTP pyrophosphatase (200 aa).

8 to 13 contributes to the substrate binding site; it reads TGNQGK. Residue Asp69 is the Proton acceptor of the active site. Position 69 (Asp69) interacts with Mg(2+). Substrate-binding positions include Ser70, 154–157, Lys177, and 182–183; these read FGYD and HR.

The protein belongs to the HAM1 NTPase family. As to quaternary structure, homodimer. Mg(2+) is required as a cofactor.

The catalysed reaction is XTP + H2O = XMP + diphosphate + H(+). It catalyses the reaction dITP + H2O = dIMP + diphosphate + H(+). It carries out the reaction ITP + H2O = IMP + diphosphate + H(+). Functionally, pyrophosphatase that catalyzes the hydrolysis of nucleoside triphosphates to their monophosphate derivatives, with a high preference for the non-canonical purine nucleotides XTP (xanthosine triphosphate), dITP (deoxyinosine triphosphate) and ITP. Seems to function as a house-cleaning enzyme that removes non-canonical purine nucleotides from the nucleotide pool, thus preventing their incorporation into DNA/RNA and avoiding chromosomal lesions. This chain is dITP/XTP pyrophosphatase, found in Vibrio vulnificus (strain CMCP6).